Reading from the N-terminus, the 818-residue chain is Probable helicase MAGATAMA 3 (818 aa).

The UvrD-like helicase ATP-binding domain maps to 259–559 (NKSQKEAIDV…KMLKTQYRMH (301 aa)). 280–287 (GPPGTGKT) contributes to the ATP binding site. 2 stretches are compositionally biased toward acidic residues: residues 781–790 (PDAPLYEDES) and 798–818 (GDDD…AGED). The disordered stretch occupies residues 781–818 (PDAPLYEDESLPVAPYGGDDDFGDGDADQDDVAMAGED).

Belongs to the helicase family. Expressed in flowers, siliques, leaves, roots and shoot apex.

It is found in the nucleus. In terms of biological role, probable helicase that may regulate RNA molecules involved in nucleolar organization and pollen tube guidance. In Arabidopsis thaliana (Mouse-ear cress), this protein is Probable helicase MAGATAMA 3 (MAA3).